The sequence spans 435 residues: Keratin, type I cytoskeletal 18 (435 aa).

Residues 2 to 84 (SYRPGSYSVS…SVSGSGLVGN (83 aa)) form a head region. The interval 85-120 (EKETMIGLNDRLAAYLETVRNLEQANSKLEFQIREA) is coil 1A. Residues 85–396 (EKETMIGLND…RLLDGEDFRL (312 aa)) form the IF rod domain. Positions 121–137 (LEKKGPTTRDLSPFEKT) are linker 1. The segment at 138 to 229 (LEDLRKKVYD…QNHNQEVNDL (92 aa)) is coil 1B. Residues 230 to 253 (RNQIAQSGVQVDVDAPKGQDLAQV) are linker 12. The segment at 254-391 (LAEVRAQYES…IATYRRLLDG (138 aa)) is coil 2. The tract at residues 392-435 (EDFRLQDALVDQSSTKSIKKVTVTQTLVDGKVVSESTNTKEIGK) is tail.

This sequence belongs to the intermediate filament family. As to quaternary structure, heterotetramer of two type I and two type II keratins. Keratin-18 associates with keratin-8. In terms of processing, phosphorylated. Proteolytically cleaved by caspases during epithelial cell apoptosis.

Its function is as follows. When phosphorylated, plays a role in filament reorganization. In Acipenser baerii (Siberian sturgeon), this protein is Keratin, type I cytoskeletal 18.